Here is a 156-residue protein sequence, read N- to C-terminus: Small ribosomal subunit protein uS7 (156 aa).

This sequence belongs to the universal ribosomal protein uS7 family. Part of the 30S ribosomal subunit. Contacts proteins S9 and S11.

Functionally, one of the primary rRNA binding proteins, it binds directly to 16S rRNA where it nucleates assembly of the head domain of the 30S subunit. Is located at the subunit interface close to the decoding center, probably blocks exit of the E-site tRNA. The protein is Small ribosomal subunit protein uS7 of Desulforamulus reducens (strain ATCC BAA-1160 / DSM 100696 / MI-1) (Desulfotomaculum reducens).